A 325-amino-acid polypeptide reads, in one-letter code: Ribose-phosphate pyrophosphokinase (325 aa).

ATP contacts are provided by residues 45-47 (NGE) and 104-105 (RQ). The Mg(2+) site is built by H138 and D178. K202 is a catalytic residue. D-ribose 5-phosphate-binding positions include R204, D230, and 234–238 (DTGGT).

Belongs to the ribose-phosphate pyrophosphokinase family. Class I subfamily. In terms of assembly, homohexamer. The cofactor is Mg(2+).

The protein resides in the cytoplasm. It catalyses the reaction D-ribose 5-phosphate + ATP = 5-phospho-alpha-D-ribose 1-diphosphate + AMP + H(+). It functions in the pathway metabolic intermediate biosynthesis; 5-phospho-alpha-D-ribose 1-diphosphate biosynthesis; 5-phospho-alpha-D-ribose 1-diphosphate from D-ribose 5-phosphate (route I): step 1/1. Functionally, involved in the biosynthesis of the central metabolite phospho-alpha-D-ribosyl-1-pyrophosphate (PRPP) via the transfer of pyrophosphoryl group from ATP to 1-hydroxyl of ribose-5-phosphate (Rib-5-P). This is Ribose-phosphate pyrophosphokinase from Corynebacterium glutamicum (strain ATCC 13032 / DSM 20300 / JCM 1318 / BCRC 11384 / CCUG 27702 / LMG 3730 / NBRC 12168 / NCIMB 10025 / NRRL B-2784 / 534).